The sequence spans 1139 residues: GRIP and coiled-coil domain-containing protein (1139 aa).

A disordered region spans residues 366 to 388 (NDDSQINNNVSNKVNSPDDDPNT). Residues 369–380 (SQINNNVSNKVN) show a composition bias toward polar residues. 2 coiled-coil regions span residues 472–648 (VTKL…INNE) and 758–877 (LYIL…ETQQ). The segment at 1004–1024 (NEQENDNNNNNNNNNNNNNVE) is disordered. Low complexity predominate over residues 1009–1022 (DNNNNNNNNNNNNN). Positions 1043-1084 (YKKIRKKLETYEILLNEQQEGKKKMTEEINSLKNQVKNYESI) form a coiled coil. The GRIP domain occupies 1084-1135 (INGNYQHIIYQKNILSNFIAQIPSRIQVDDYVSVIFNSFNFSNQEIEAINIK).

In Plasmodium falciparum (isolate 3D7), this protein is GRIP and coiled-coil domain-containing protein.